The chain runs to 213 residues: Uridine kinase (213 aa).

An ATP-binding site is contributed by 15–22 (GASASGKS).

It belongs to the uridine kinase family.

Its subcellular location is the cytoplasm. The enzyme catalyses uridine + ATP = UMP + ADP + H(+). It catalyses the reaction cytidine + ATP = CMP + ADP + H(+). It functions in the pathway pyrimidine metabolism; CTP biosynthesis via salvage pathway; CTP from cytidine: step 1/3. It participates in pyrimidine metabolism; UMP biosynthesis via salvage pathway; UMP from uridine: step 1/1. In Yersinia enterocolitica serotype O:8 / biotype 1B (strain NCTC 13174 / 8081), this protein is Uridine kinase.